The chain runs to 561 residues: Hemolysin transporter protein HpmB (561 aa).

Residues 1–17 (MKKKVVLLTLLSCFSTS) form the signal peptide. In terms of domain architecture, POTRA spans 77 to 150 (LPIKGVYIQG…GELGLYAIEG (74 aa)).

This sequence belongs to the TPS (TC 1.B.20) family.

It is found in the cell outer membrane. Interacts with the cell-bound hemolysin. Necessary for the extracellular secretion and activation of the hemolysin. Its function is as follows. Probable member of a two partner secretion pathway (TPS) in which it mediates the secretion of hemolysin. The protein is Hemolysin transporter protein HpmB (hpmB) of Proteus mirabilis.